Reading from the N-terminus, the 1987-residue chain is Transcription factor 20 (1987 aa).

A compositionally biased stretch (polar residues) spans 1–22 (MQSFREQSSYHGNQQSYPQEVH). 5 disordered regions span residues 1–79 (MQSF…QGYQ), 96–432 (DTVA…GNVP), 446–481 (LSPTPSMMPSPNSHAAGFKGFGLEGVPEKRLTDPGL), 502–816 (LLSD…GTAR), and 844–891 (PHWG…SLSE). Positions 51-74 (TGSSSSGRRGTAAAAAAMASETSG) are enriched in low complexity. Arg-59 is modified (omega-N-methylarginine). The segment covering 121-142 (QGSSFGNQYASEGHVSQFQAQH) has biased composition (polar residues). Residues 163–205 (SAQYQQQASSQQQQQQQQQQQQQQQQQQQQVQQLRQQLYQSHQ) are compositionally biased toward low complexity. A compositionally biased stretch (polar residues) spans 206 to 235 (PLPQTTGQPASGSSHLQPMQRPSTLPSSAG). The span at 248–277 (QSSASSSSSSSFPSPQRFSQSGQSYDGSYS) shows a compositional bias: low complexity. Residues 289 to 311 (VGSNAQAYGTQSNYSYQPQSMKN) show a composition bias toward polar residues. Residue Lys-316 forms a Glycyl lysine isopeptide (Lys-Gly) (interchain with G-Cter in SUMO2) linkage. Over residues 322–354 (QQGQQQQQQQPQPQQQQPQQQQQQQQQQQHPPQ) the composition is skewed to low complexity. Residues 357 to 377 (MQYTNAATKMPLQSQVGQYNQ) show a composition bias toward polar residues. Over residues 396-416 (SNPSPAASVVQSPSCSSTPSP) the composition is skewed to low complexity. Residues 417 to 432 (LMQSGENLQCGQGNVP) show a composition bias toward polar residues. Positions 446–456 (LSPTPSMMPSP) are enriched in low complexity. Phosphoserine is present on residues Ser-447 and Ser-458. Polar residues-rich tracts occupy residues 526–537 (SCTNSEGSSQPE), 566–576 (LSGQSTSSDTT), and 585–605 (AGSSPTQGAQNEAPRLSTSPA). 4 positions are modified to phosphoserine: Ser-567, Ser-588, Ser-603, and Ser-612. Residues 618 to 627 (TSLSSEGNTK) are compositionally biased toward polar residues. Lys-631 is modified (N6-acetyllysine). Positions 645–657 (RVEKSGGQDKGSQ) are enriched in basic and acidic residues. Positions 666–682 (RPPSNSGVKEISHTSLP) are enriched in polar residues. Ser-669 carries the post-translational modification Phosphoserine. The segment covering 693–715 (GNKNGDNNSSNHNGEGNGPSSHS) has biased composition (low complexity). A compositionally biased stretch (polar residues) spans 722-731 (TGRTEPSKSP). Residues Lys-739, Lys-762, Lys-777, Lys-852, Lys-861, and Lys-873 each participate in a glycyl lysine isopeptide (Lys-Gly) (interchain with G-Cter in SUMO2) cross-link. Residues 761 to 777 (EKGDFGSHGERKGRNEK) show a composition bias toward basic and acidic residues. Ser-900 is modified (phosphoserine). Residues Lys-949 and Lys-951 each participate in a glycyl lysine isopeptide (Lys-Gly) (interchain with G-Cter in SUMO2) cross-link. The interval 949-1065 (KLKSQSGQIK…GDPHHMNPHM (117 aa)) is disordered. A Glycyl lysine isopeptide (Lys-Gly) (interchain with G-Cter in SUMO1); alternate cross-link involves residue Lys-958. Residue Lys-958 forms a Glycyl lysine isopeptide (Lys-Gly) (interchain with G-Cter in SUMO2); alternate linkage. Residues 974–989 (KSGDHCHPTSIKHETY) show a composition bias toward basic and acidic residues. Lys-985 participates in a covalent cross-link: Glycyl lysine isopeptide (Lys-Gly) (interchain with G-Cter in SUMO2). Ser-994 and Ser-1033 each carry phosphoserine. Residue Lys-1043 forms a Glycyl lysine isopeptide (Lys-Gly) (interchain with G-Cter in SUMO2) linkage. Arg-1052 carries the omega-N-methylarginine modification. Ser-1081 carries the phosphoserine modification. Residues Lys-1114, Lys-1126, Lys-1165, Lys-1201, Lys-1206, Lys-1211, Lys-1238, Lys-1259, Lys-1295, and Lys-1302 each participate in a glycyl lysine isopeptide (Lys-Gly) (interchain with G-Cter in SUMO2) cross-link. Residues 1136–1372 (VIAAAQHRQE…SPAKTKILPP (237 aa)) are disordered. The segment covering 1158–1170 (DRVRSPLKNDKDG) has biased composition (basic and acidic residues). The leucine-zipper stretch occupies residues 1198–1219 (LPAKSMELKHSSQKLQESCWDL). A Nuclear localization signal motif is present at residues 1282–1295 (RRRVRSFISPIPSK). 2 stretches are compositionally biased toward basic and acidic residues: residues 1305–1321 (NADDKGRLLHPSKEGAD) and 1332–1346 (HSQDIKSIPKRDSSK). Phosphoserine is present on Ser-1333. Lys-1337 is covalently cross-linked (Glycyl lysine isopeptide (Lys-Gly) (interchain with G-Cter in SUMO2)). Phosphoserine is present on Ser-1363. A Glycyl lysine isopeptide (Lys-Gly) (interchain with G-Cter in SUMO2) cross-link involves residue Lys-1366. Phosphoserine is present on Ser-1389. The interval 1415 to 1434 (SLKSGPPEGGTVATQEAEME) is disordered. Residues Lys-1417, Lys-1437, Lys-1456, and Lys-1474 each participate in a glycyl lysine isopeptide (Lys-Gly) (interchain with G-Cter in SUMO2) cross-link. The disordered stretch occupies residues 1446–1636 (SVTNQESNVE…KQAVPIVEPQ (191 aa)). Over residues 1463 to 1479 (EEWRGSGDDKVKTEAHV) the composition is skewed to basic and acidic residues. The segment covering 1481–1501 (TASTGKEPSGTMTSTASQKPG) has biased composition (polar residues). Lys-1538 is covalently cross-linked (Glycyl lysine isopeptide (Lys-Gly) (interchain with G-Cter in SUMO2)). Ser-1550 carries the post-translational modification Phosphoserine. Lys-1552 is covalently cross-linked (Glycyl lysine isopeptide (Lys-Gly) (interchain with G-Cter in SUMO2)). Positions 1565–1579 (GKKKGRPIGSVNKQK) form a DNA-binding region, a.T hook. The segment covering 1584–1594 (QPPPPPQPPQM) has biased composition (pro residues). The short motif at 1604–1628 (KPKKQRQRRERRKPGAQPRKRKTKQ) is the Nuclear localization signal element. Residues 1606–1627 (KKQRQRRERRKPGAQPRKRKTK) are compositionally biased toward basic residues. Residue Lys-1641 forms a Glycyl lysine isopeptide (Lys-Gly) (interchain with G-Cter in SUMO2) linkage. 2 disordered regions span residues 1685–1710 (QTKLVRSRKGQRSLTPPPSSTESKVL) and 1760–1865 (TLPK…GPEL). Ser-1697 carries the phosphoserine modification. A phosphothreonine mark is found at Thr-1699, Thr-1790, and Thr-1792. The Nuclear localization signal signature appears at 1812-1819 (RFKRRHRS). The span at 1850–1859 (DTKPSVPTTS) shows a compositional bias: polar residues. Residues 1856-1892 (PTTSEGGPELELQIPELPLDSNEFWVHEGCILWANGI) form a C2HC pre-PHD-type; degenerate zinc finger. Residues 1912–1960 (MKCSHCQEAGATLGCYNKGCSFRYHYPCAIDADCLLHEENFSVRCPKHK) form a PHD-type zinc finger. The tract at residues 1966–1987 (PLPPLQNKTAKGSLSTEQSERG) is disordered. Over residues 1971–1987 (QNKTAKGSLSTEQSERG) the composition is skewed to polar residues.

In terms of assembly, homodimer. Interacts with RNF4 and JUN. Binds to the regulatory region of MMP3. In terms of tissue distribution, expressed in brain, lung, liver, kidney and testes.

Its subcellular location is the nucleus. Functionally, transcriptional activator that binds to the regulatory region of MMP3 and thereby controls stromelysin expression. It stimulates the activity of various transcriptional activators such as JUN, SP1, PAX6 and ETS1, suggesting a function as a coactivator. The chain is Transcription factor 20 (Tcf20) from Mus musculus (Mouse).